The chain runs to 137 residues: Phospholipase A2 homolog PLA2-03 (137 aa).

Residues 1–16 (MRTLWIVAVLLVGVEG) form the signal peptide. 7 disulfides stabilise this stretch: C42–C131, C44–C60, C59–C111, C65–C137, C66–C104, C73–C97, and C91–C102. The segment at 121–133 (KKYKIFPKFLCKK) is important for membrane-damaging activities in eukaryotes and bacteria; heparin-binding.

The protein belongs to the phospholipase A2 family. Group II subfamily. K49 sub-subfamily. As to expression, expressed by the venom gland.

It localises to the secreted. In terms of biological role, snake venom phospholipase A2 homolog that lacks enzymatic activity. Is myotoxic and displays edema-inducing activities in mouse paw. A model of myotoxic mechanism has been proposed: an apo Lys49-PLA2 is activated by the entrance of a hydrophobic molecule (e.g. fatty acid) at the hydrophobic channel of the protein leading to a reorientation of a monomer. This reorientation causes a transition between 'inactive' to 'active' states, causing alignment of C-terminal and membrane-docking sites (MDoS) side-by-side and putting the membrane-disruption sites (MDiS) in the same plane, exposed to solvent and in a symmetric position for both monomers. The MDoS region stabilizes the toxin on membrane by the interaction of charged residues with phospholipid head groups. Subsequently, the MDiS region destabilizes the membrane with penetration of hydrophobic residues. This insertion causes a disorganization of the membrane, allowing an uncontrolled influx of ions (i.e. calcium and sodium), and eventually triggering irreversible intracellular alterations and cell death. This chain is Phospholipase A2 homolog PLA2-03, found in Ovophis okinavensis (Ryukyu Island pit viper).